The chain runs to 379 residues: MKSAYIHIPFCEHICHYCDFNKYFIQSQPVDEYLNALEQEMINTIAKTGQPDLKTIFIGGGTPTSLSEEQLKKLMDMINRVLKPSSDLSEFAVEANPDDLSAEKLKILKEAGVNRLSFGVQTFEDDLLEKIGRVHKQKDVFTSFERAREIGFENISLDLMFGLPGQTLKHLEHSINTALSLDAEHYSVYSLIVEPKTVFYNLMQKGRLHLPPQEQEAEMYEIVMSKMEAHGIHQYEISNFAKAGMESKHNLTYWSNEQYFGFGAGAHGYIGGTRTVNVGPVKHYIDLIAEKGFPYRDTHEVTTEEQIEEEMFLGLRKTAGVSKKRFAEKYGRSLDGLFPSVLKDLAEKGLIHNSESAVYLTHQGKLLGNEVFGAFLGEL.

Positions 1–233 (MKSAYIHIPF…MSKMEAHGIH (233 aa)) constitute a Radical SAM core domain. An S-adenosyl-L-methionine-binding site is contributed by Tyr-5. Cys-11, Cys-15, and Cys-18 together coordinate [4Fe-4S] cluster. S-adenosyl-L-methionine-binding positions include Gly-60, 61 to 62 (GT), Glu-94, Gln-121, Arg-133, and Asp-158.

The protein belongs to the anaerobic coproporphyrinogen-III oxidase family. HemW subfamily. Requires [4Fe-4S] cluster as cofactor.

The protein localises to the cytoplasm. Its function is as follows. Probably acts as a heme chaperone, transferring heme to an unknown acceptor. Binds one molecule of heme per monomer, possibly covalently. Binds 1 [4Fe-4S] cluster. The cluster is coordinated with 3 cysteines and an exchangeable S-adenosyl-L-methionine. This Bacillus subtilis (strain 168) protein is Heme chaperone HemW.